We begin with the raw amino-acid sequence, 462 residues long: MPTTVTEFDTITAISTPPGEGAISIVRLSGDDSLAIIKRVYRGKDLDKVASHTINYGHIIDPKTDAVVDEVMVSVMRAPKTFTREDVIEINCHGGIVATNRILQLLMSYGARMAEPGEFTKRAFLNGRIDLTQAESVMDLIRAKTDRAMQVAVDQLDGSLTHLIKNLRQEILEVLAQVEVNIDYPEYDTDEMTTRILLEKAELVKGRIGELLQTAQQGKVLREGLATAIVGRPNVGKSSLLNHLLHEDKAIVTDVAGTTRDVLEEYVNVRGVPLKLVDTAGIHDTEDKVEKIGVERSRAAITKADLILLVLNQSEPLTIEDRELITATTDKKRIIILNKTDLPNQLDLDELQTLVRADEVIQTSILTSEGVTDLEAQIAKLFFGGIENSQSTVMITNARQIGLLNQAQQSLDEVISGIAAGMPVDLVQIDMTNCWDKLGEITGDSAPDELITELFSQFCLGK.

Positions 27, 89, and 128 each coordinate (6S)-5-formyl-5,6,7,8-tetrahydrofolate. Residues Gly224–Phe383 form the TrmE-type G domain. K(+) is bound at residue Asn234. GTP contacts are provided by residues Asn234–Ser239, Thr253–Thr259, and Asp278–Gly281. Residue Ser238 coordinates Mg(2+). Residues Thr253, Val255, and Thr258 each coordinate K(+). Residue Thr259 participates in Mg(2+) binding. Lys462 serves as a coordination point for (6S)-5-formyl-5,6,7,8-tetrahydrofolate.

This sequence belongs to the TRAFAC class TrmE-Era-EngA-EngB-Septin-like GTPase superfamily. TrmE GTPase family. As to quaternary structure, homodimer. Heterotetramer of two MnmE and two MnmG subunits. K(+) serves as cofactor.

The protein localises to the cytoplasm. In terms of biological role, exhibits a very high intrinsic GTPase hydrolysis rate. Involved in the addition of a carboxymethylaminomethyl (cmnm) group at the wobble position (U34) of certain tRNAs, forming tRNA-cmnm(5)s(2)U34. This Latilactobacillus sakei subsp. sakei (strain 23K) (Lactobacillus sakei subsp. sakei) protein is tRNA modification GTPase MnmE.